The chain runs to 323 residues: Putative divalent cation/proton antiporter TMEM165 (323 aa).

An N-terminal signal peptide occupies residues 1 to 33 (MAASARGSGRAPTRRLLVLLLLPLLWAPAGVRA). Residues 34–88 (GPEEDLSHRNQEPPAPAQQLQPQPAAVQGLEPARAEKGFTPAAPVHTNREDAATQ) lie on the Lumenal side of the membrane. Residues 35-44 (PEEDLSHRNQ) show a composition bias toward basic and acidic residues. The interval 35–60 (PEEDLSHRNQEPPAPAQQLQPQPAAV) is disordered. The segment covering 50–59 (AQQLQPQPAA) has biased composition (low complexity). The chain crosses the membrane as a helical span at residues 89–109 (ANLGFIHAFVAAISVIIVSEL). Residues 110–126 (GDKTFFIAAIMAMRYNR) lie on the Cytoplasmic side of the membrane. A helical membrane pass occupies residues 127–147 (LTVLAGAMLALALMTCLSVLF). Residues 148–151 (GYAT) are Lumenal-facing. A helical transmembrane segment spans residues 152–172 (TVIPRVYTYYVSTALFAIFGI). Topologically, residues 173–227 (RMLREGLKMSPDEGQEELEEVQAELKKKDEEFQRTKLLNGPDVETGTSTAIPQKK) are cytoplasmic. A coiled-coil region spans residues 184 to 211 (DEGQEELEEVQAELKKKDEEFQRTKLLN). Residues 228–248 (WLHFISPIFVQALTLTFLAEW) form a helical membrane-spanning segment. The Lumenal segment spans residues 249 to 266 (GDRSQLTTIVLAAREDPY). A helical transmembrane segment spans residues 267 to 287 (GVAVGGTVGHCLCTGLAVIGG). Residues 288-298 (RMIAQKISVRT) lie on the Cytoplasmic side of the membrane. The chain crosses the membrane as a helical span at residues 299–319 (VTIIGGIVFLAFAFSALFISP). The Lumenal segment spans residues 320 to 323 (ESGF).

Belongs to the GDT1 family.

It is found in the golgi apparatus membrane. It carries out the reaction Ca(2+)(in) + n H(+)(out) = Ca(2+)(out) + n H(+)(in). The enzyme catalyses Mn(2+)(in) + n H(+)(out) = Mn(2+)(out) + n H(+)(in). In terms of biological role, putative divalent cation:proton antiporter that exchanges calcium or manganese ions for protons across the Golgi membrane. Mediates the reversible transport of calcium or manganese to the Golgi lumen driven by the proton gradient and possibly the membrane potential generated by V-ATPase. Provides calcium or manganese cofactors to resident Golgi enzymes and contributes to the maintenance of an acidic luminal Golgi pH required for proper functioning of the secretory pathway. Promotes Ca(2+) storage within the Golgi lumen of the mammary epithelial cells to be then secreted into milk. The transport mechanism and stoichiometry remains to be elucidated. The polypeptide is Putative divalent cation/proton antiporter TMEM165 (Rattus norvegicus (Rat)).